Here is a 919-residue protein sequence, read N- to C-terminus: Isoleucine--tRNA ligase (919 aa).

Positions 57-67 match the 'HIGH' region motif; sequence PYANGHIHIGT. An L-isoleucyl-5'-AMP-binding site is contributed by E553. A 'KMSKS' region motif is present at residues 594-598; it reads KMSKS. K597 serves as a coordination point for ATP. Zn(2+)-binding residues include C887, C890, C907, and C910.

This sequence belongs to the class-I aminoacyl-tRNA synthetase family. IleS type 1 subfamily. Monomer. Requires Zn(2+) as cofactor.

It localises to the cytoplasm. It catalyses the reaction tRNA(Ile) + L-isoleucine + ATP = L-isoleucyl-tRNA(Ile) + AMP + diphosphate. Catalyzes the attachment of isoleucine to tRNA(Ile). As IleRS can inadvertently accommodate and process structurally similar amino acids such as valine, to avoid such errors it has two additional distinct tRNA(Ile)-dependent editing activities. One activity is designated as 'pretransfer' editing and involves the hydrolysis of activated Val-AMP. The other activity is designated 'posttransfer' editing and involves deacylation of mischarged Val-tRNA(Ile). This is Isoleucine--tRNA ligase from Thermotoga maritima (strain ATCC 43589 / DSM 3109 / JCM 10099 / NBRC 100826 / MSB8).